The chain runs to 615 residues: Proteasome-associated ATPase (615 aa).

A disordered region spans residues 1 to 27; that stretch reads MSESERSEASEVFGTSPDSRLSSEDAA. Residues 22–99 are a coiled coil; sequence SSEDAAELEQ…LREEVDRLGQ (78 aa). ATP is bound at residue 302–307; the sequence is GCGKTL. The tract at residues 614-615 is docks into pockets in the proteasome alpha-ring; it reads YL.

This sequence belongs to the AAA ATPase family. In terms of assembly, homohexamer. Assembles into a hexameric ring structure that caps the 20S proteasome core. Strongly interacts with the prokaryotic ubiquitin-like protein Pup through a hydrophobic interface; the interacting region of ARC lies in its N-terminal coiled-coil domain. There is one Pup binding site per ARC hexamer ring. Upon ATP-binding, the C-terminus of ARC interacts with the alpha-rings of the proteasome core, possibly by binding to the intersubunit pockets.

It functions in the pathway protein degradation; proteasomal Pup-dependent pathway. ATPase which is responsible for recognizing, binding, unfolding and translocation of pupylated proteins into the bacterial 20S proteasome core particle. May be essential for opening the gate of the 20S proteasome via an interaction with its C-terminus, thereby allowing substrate entry and access to the site of proteolysis. Thus, the C-termini of the proteasomal ATPase may function like a 'key in a lock' to induce gate opening and therefore regulate proteolysis. This Mycolicibacterium vanbaalenii (strain DSM 7251 / JCM 13017 / BCRC 16820 / KCTC 9966 / NRRL B-24157 / PYR-1) (Mycobacterium vanbaalenii) protein is Proteasome-associated ATPase.